The chain runs to 477 residues: Glutamate--tRNA ligase 2 (477 aa).

Residues 9-19 (PSPTGFLHIGG) carry the 'HIGH' region motif. The 'KMSKS' region motif lies at 238–242 (KLSKR). Residue Lys241 coordinates ATP.

Belongs to the class-I aminoacyl-tRNA synthetase family. Glutamate--tRNA ligase type 1 subfamily. In terms of assembly, monomer.

Its subcellular location is the cytoplasm. It carries out the reaction tRNA(Glu) + L-glutamate + ATP = L-glutamyl-tRNA(Glu) + AMP + diphosphate. Functionally, catalyzes the attachment of glutamate to tRNA(Glu) in a two-step reaction: glutamate is first activated by ATP to form Glu-AMP and then transferred to the acceptor end of tRNA(Glu). The protein is Glutamate--tRNA ligase 2 of Paramagnetospirillum magneticum (strain ATCC 700264 / AMB-1) (Magnetospirillum magneticum).